A 430-amino-acid chain; its full sequence is Histidine--tRNA ligase (430 aa).

The protein belongs to the class-II aminoacyl-tRNA synthetase family. As to quaternary structure, homodimer.

It localises to the cytoplasm. The catalysed reaction is tRNA(His) + L-histidine + ATP = L-histidyl-tRNA(His) + AMP + diphosphate + H(+). The chain is Histidine--tRNA ligase from Acaryochloris marina (strain MBIC 11017).